The sequence spans 269 residues: UPF0354 protein YtpQ (269 aa).

The protein belongs to the UPF0354 family.

The protein is UPF0354 protein YtpQ (ytpQ) of Bacillus subtilis (strain 168).